Reading from the N-terminus, the 132-residue chain is Translation initiation factor 2 subunit beta (132 aa).

The segment at 1-30 (MDYEEQLDRAMDEKPDVTGSETRFEVPDPN) is disordered.

Belongs to the eIF-2-beta/eIF-5 family. Heterotrimer composed of an alpha, a beta and a gamma chain.

Functionally, eIF-2 functions in the early steps of protein synthesis by forming a ternary complex with GTP and initiator tRNA. This Halobacterium salinarum (strain ATCC 29341 / DSM 671 / R1) protein is Translation initiation factor 2 subunit beta.